A 305-amino-acid polypeptide reads, in one-letter code: UDP-3-O-acyl-N-acetylglucosamine deacetylase (305 aa).

Residues H79, H238, and D242 each contribute to the Zn(2+) site. H265 (proton donor) is an active-site residue.

The protein belongs to the LpxC family. The cofactor is Zn(2+).

The catalysed reaction is a UDP-3-O-[(3R)-3-hydroxyacyl]-N-acetyl-alpha-D-glucosamine + H2O = a UDP-3-O-[(3R)-3-hydroxyacyl]-alpha-D-glucosamine + acetate. Its pathway is glycolipid biosynthesis; lipid IV(A) biosynthesis; lipid IV(A) from (3R)-3-hydroxytetradecanoyl-[acyl-carrier-protein] and UDP-N-acetyl-alpha-D-glucosamine: step 2/6. Functionally, catalyzes the hydrolysis of UDP-3-O-myristoyl-N-acetylglucosamine to form UDP-3-O-myristoylglucosamine and acetate, the committed step in lipid A biosynthesis. In Histophilus somni (strain 129Pt) (Haemophilus somnus), this protein is UDP-3-O-acyl-N-acetylglucosamine deacetylase.